A 172-amino-acid chain; its full sequence is Shikimate kinase (172 aa).

14–19 is a binding site for ATP; the sequence is GAGKST. Serine 18 is a Mg(2+) binding site. Substrate is bound by residues aspartate 36, arginine 60, and glycine 82. Arginine 120 contacts ATP. Residue arginine 140 participates in substrate binding. Glutamine 157 contacts ATP.

Belongs to the shikimate kinase family. Monomer. The cofactor is Mg(2+).

It localises to the cytoplasm. The enzyme catalyses shikimate + ATP = 3-phosphoshikimate + ADP + H(+). The protein operates within metabolic intermediate biosynthesis; chorismate biosynthesis; chorismate from D-erythrose 4-phosphate and phosphoenolpyruvate: step 5/7. In terms of biological role, catalyzes the specific phosphorylation of the 3-hydroxyl group of shikimic acid using ATP as a cosubstrate. The protein is Shikimate kinase of Aeromonas salmonicida (strain A449).